The chain runs to 129 residues: Glycine cleavage system H protein (129 aa).

In terms of domain architecture, Lipoyl-binding spans 24 to 106; that stretch reads LLKIGVSEFA…IGEGWLVILK (83 aa). Position 65 is an N6-lipoyllysine (Lys65).

It belongs to the GcvH family. As to quaternary structure, the glycine cleavage system is composed of four proteins: P, T, L and H. The cofactor is (R)-lipoate.

The glycine cleavage system catalyzes the degradation of glycine. The H protein shuttles the methylamine group of glycine from the P protein to the T protein. This chain is Glycine cleavage system H protein, found in Prochlorococcus marinus (strain MIT 9215).